Reading from the N-terminus, the 281-residue chain is Ribosomal protein L11 methyltransferase (281 aa).

Residues threonine 133, glycine 154, aspartate 175, and asparagine 216 each contribute to the S-adenosyl-L-methionine site.

It belongs to the methyltransferase superfamily. PrmA family.

It localises to the cytoplasm. The enzyme catalyses L-lysyl-[protein] + 3 S-adenosyl-L-methionine = N(6),N(6),N(6)-trimethyl-L-lysyl-[protein] + 3 S-adenosyl-L-homocysteine + 3 H(+). Methylates ribosomal protein L11. This Campylobacter jejuni (strain RM1221) protein is Ribosomal protein L11 methyltransferase.